A 568-amino-acid polypeptide reads, in one-letter code: C6 finger domain transcription factor BOA13 (568 aa).

The segment at residues 14 to 41 (CNECHASKVRCSGERTGCRRCVYNQQKC) is a DNA-binding region (zn(2)-C6 fungal-type). Disordered regions lie at residues 92–114 (EANG…EGIT), 207–278 (ATSS…HHNH), and 467–490 (RSRS…FSNP). Basic and acidic residues predominate over residues 242–259 (HSDLSEKQAQHAQNDLRW). Residues 260 to 274 (RSQSQSYKRPTISTQ) show a composition bias toward polar residues. Low complexity predominate over residues 470 to 490 (SLSTPSPRNTPSTSNSPFSNP).

It is found in the nucleus. In terms of biological role, transcription factor that probably regulates the gene clusters that mediates the biosynthesis of botcinin acid and its botcinin derivatives, acetate-derived polyketides that contribute to virulence when combined with the sesquiterpene botrydial. Botcinin acid and its derivatives have been shown to induce chlorosis and necrosis during host plant infection, but also have antifungal activities. The chain is C6 finger domain transcription factor BOA13 from Botryotinia fuckeliana (strain B05.10) (Noble rot fungus).